The primary structure comprises 404 residues: Dual-specificity RNA methyltransferase RlmN (404 aa).

The active-site Proton acceptor is E118. The region spanning 125–357 (VGRAGALCVS…NKAGYSSPIR (233 aa)) is the Radical SAM core domain. C132 and C368 form a disulfide bridge. [4Fe-4S] cluster contacts are provided by C139, C143, and C146. Residues 194–195 (GE), S226, 248–250 (SLH), and N325 contribute to the S-adenosyl-L-methionine site. C368 acts as the S-methylcysteine intermediate in catalysis.

It belongs to the radical SAM superfamily. RlmN family. [4Fe-4S] cluster serves as cofactor.

It localises to the cytoplasm. It catalyses the reaction adenosine(2503) in 23S rRNA + 2 reduced [2Fe-2S]-[ferredoxin] + 2 S-adenosyl-L-methionine = 2-methyladenosine(2503) in 23S rRNA + 5'-deoxyadenosine + L-methionine + 2 oxidized [2Fe-2S]-[ferredoxin] + S-adenosyl-L-homocysteine. The enzyme catalyses adenosine(37) in tRNA + 2 reduced [2Fe-2S]-[ferredoxin] + 2 S-adenosyl-L-methionine = 2-methyladenosine(37) in tRNA + 5'-deoxyadenosine + L-methionine + 2 oxidized [2Fe-2S]-[ferredoxin] + S-adenosyl-L-homocysteine. Specifically methylates position 2 of adenine 2503 in 23S rRNA and position 2 of adenine 37 in tRNAs. m2A2503 modification seems to play a crucial role in the proofreading step occurring at the peptidyl transferase center and thus would serve to optimize ribosomal fidelity. The sequence is that of Dual-specificity RNA methyltransferase RlmN from Caulobacter vibrioides (strain ATCC 19089 / CIP 103742 / CB 15) (Caulobacter crescentus).